Consider the following 307-residue polypeptide: Ribonuclease Z (307 aa).

Zn(2+) contacts are provided by histidine 63, histidine 65, aspartate 67, histidine 68, histidine 141, aspartate 212, and histidine 270. Aspartate 67 (proton acceptor) is an active-site residue.

This sequence belongs to the RNase Z family. In terms of assembly, homodimer. Zn(2+) serves as cofactor.

The enzyme catalyses Endonucleolytic cleavage of RNA, removing extra 3' nucleotides from tRNA precursor, generating 3' termini of tRNAs. A 3'-hydroxy group is left at the tRNA terminus and a 5'-phosphoryl group is left at the trailer molecule.. Its function is as follows. Zinc phosphodiesterase, which displays some tRNA 3'-processing endonuclease activity. Probably involved in tRNA maturation, by removing a 3'-trailer from precursor tRNA. In Bacillus cereus (strain B4264), this protein is Ribonuclease Z.